We begin with the raw amino-acid sequence, 286 residues long: S-adenosylmethionine-dependent methyltransferase UmaA (286 aa).

S-adenosyl-L-methionine contacts are provided by residues tyrosine 32–threonine 33, leucine 67–glycine 75, threonine 93–glutamine 98, and tryptophan 122–aspartate 123. The active site involves cysteine 268.

It belongs to the CFA/CMAS family.

It localises to the cytoplasm. Functionally, methyltransferase that modifies short-chain fatty acids. In vitro, catalyzes the transfer of the methyl group from S-adenosyl-L-methionine (SAM) to the double bond of phospholipid-linked oleic acid to produce tuberculostearic acid (10-methylstearic-acid or TSA). The chain is S-adenosylmethionine-dependent methyltransferase UmaA from Mycobacterium tuberculosis (strain ATCC 25618 / H37Rv).